The chain runs to 576 residues: G protein-coupled receptor kinase 6 (576 aa).

The segment at 1–185 is N-terminal; it reads MELENIVANT…LERQPVTKNT (185 aa). One can recognise an RGS domain in the interval 53–171; the sequence is YHSLCERQPI…LDSIYFNRFL (119 aa). Positions 186-448 constitute a Protein kinase domain; it reads FRQYRVLGKG…AREVKEHPLF (263 aa). ATP contacts are provided by residues 192-200, Lys-215, and 264-270; these read LGKGGFGEV and TLMNGGD. Residue Asp-311 is the Proton acceptor of the active site. 315-318 serves as a coordination point for ATP; the sequence is ENIL. The AGC-kinase C-terminal domain occupies 449-514; the sequence is KKLNFKRLGA…GSVSIPWQNE (66 aa). Ser-484 bears the Phosphoserine mark. Thr-485 bears the Phosphothreonine mark. S-palmitoyl cysteine attachment occurs at residues Cys-561, Cys-562, and Cys-565. Residues Ser-566 and Ser-568 each carry the phosphoserine modification.

This sequence belongs to the protein kinase superfamily. AGC Ser/Thr protein kinase family. GPRK subfamily. In terms of assembly, interacts with GIT1. Expressed in the brain in striatal neurons.

It localises to the membrane. It carries out the reaction [G-protein-coupled receptor] + ATP = [G-protein-coupled receptor]-phosphate + ADP + H(+). Functionally, specifically phosphorylates the activated forms of G protein-coupled receptors. Such receptor phosphorylation initiates beta-arrestin-mediated receptor desensitization, internalization, and signaling events leading to their desensitization. Seems to be involved in the desensitization of D2-like dopamine receptors in striatum and chemokine receptor CXCR4 which is critical for CXCL12-induced cell chemotaxis. Phosphorylates rhodopsin (RHO) (in vitro) and a non G-protein-coupled receptor, LRP6 during Wnt signaling (in vitro). This is G protein-coupled receptor kinase 6 (Grk6) from Mus musculus (Mouse).